We begin with the raw amino-acid sequence, 241 residues long: Beta-nerve growth factor (241 aa).

A signal peptide spans 1 to 18; that stretch reads MSMLFYTLITAFLIGIQA. A propeptide spanning residues 19-121 is cleaved from the precursor; the sequence is EPHSESNVPA…PVNRTHRSKR (103 aa). 3 N-linked (GlcNAc...) asparagine glycosylation sites follow: Asn69, Asn114, and Asn166. Cystine bridges form between Cys136/Cys201, Cys179/Cys229, and Cys189/Cys231.

It belongs to the NGF-beta family. In terms of assembly, homodimer. The homodimer interacts with a single NTRK1 chain. The homodimer interacts with a single NGFR chain. The NGF dimer interacts with a single SORCS2 chain (via extracellular domain). The NGF precursor (proNGF) binds to a receptor complex formed by SORT1 and NGFR, which leads to NGF endocytosis. Both mature NGF and the immature NGF precursor (proNGF) interact with SORCS2 and with the heterodimer formed by SORCS2 and NGFR (via extracellular domains). The NGF precursor (proNGF) has much higher affinity for SORCS2 than mature NGF. The NGF precursor (proNGF) has much higher affinity for SORT1 than mature NGF. Interacts with ADAM10 in a divalent cation-dependent manner. Interacts with SORCS3.

It localises to the secreted. The protein resides in the endosome lumen. Its function is as follows. Nerve growth factor is important for the development and maintenance of the sympathetic and sensory nervous systems. Extracellular ligand for the NTRK1 and NGFR receptors, activates cellular signaling cascades through those receptor tyrosine kinase to regulate neuronal proliferation, differentiation and survival. Inhibits metalloproteinase dependent proteolysis of platelet glycoprotein VI. This is Beta-nerve growth factor (NGF) from Saimiri boliviensis boliviensis (Bolivian squirrel monkey).